The following is a 206-amino-acid chain: Dehydration-responsive element-binding protein 2D (206 aa).

Residues 13–40 form a disordered region; sequence ANKKQRTVQASSRKGCMRGKGGPDNASC. Residues 41–98 constitute a DNA-binding region (AP2/ERF); that stretch reads TYKGVRQRTWGKWVAEIREPNRGARLWLGTFDTSREAALAYDSAARKLYGPEAHLNLP. Positions 102-139 are disordered; that stretch reads RSYPKTASSPASQTTPSSNTGGKSSSDSESPCSSNEMS. Over residues 107–139 the composition is skewed to low complexity; that stretch reads TASSPASQTTPSSNTGGKSSSDSESPCSSNEMS.

It belongs to the AP2/ERF transcription factor family. ERF subfamily.

It localises to the nucleus. Functionally, putative transcriptional activator that binds specifically to the DNA sequence 5'-[AG]CCGAC-3'. Binding to the C-repeat/DRE element mediates high salinity-inducible transcription. This is Dehydration-responsive element-binding protein 2D (DREB2D) from Arabidopsis thaliana (Mouse-ear cress).